We begin with the raw amino-acid sequence, 122 residues long: Large ribosomal subunit protein bL19 (122 aa).

The protein belongs to the bacterial ribosomal protein bL19 family.

In terms of biological role, this protein is located at the 30S-50S ribosomal subunit interface and may play a role in the structure and function of the aminoacyl-tRNA binding site. The sequence is that of Large ribosomal subunit protein bL19 (rplS) from Synechocystis sp. (strain ATCC 27184 / PCC 6803 / Kazusa).